The sequence spans 100 residues: MRASLLLFILLVYLAHAPQAQGVFGPRRCKGKLGYCRSKCQSKQVELGKCSTKAICCGISTGTSSSQGSHEVPVINSEPALESKPEPQDTQEEEATMVSE.

Residues 1–22 (MRASLLLFILLVYLAHAPQAQG) form the signal peptide. A propeptide spanning residues 23–26 (VFGP) is cleaved from the precursor. 3 disulfide bridges follow: cysteine 29/cysteine 56, cysteine 36/cysteine 50, and cysteine 40/cysteine 57. Residues 60-100 (STGTSSSQGSHEVPVINSEPALESKPEPQDTQEEEATMVSE) are disordered. Over residues 89-100 (DTQEEEATMVSE) the composition is skewed to acidic residues.

This sequence belongs to the beta-defensin family. Highly expressed in kidney, lowly expressed in spleen, and expressed at lower levels in lung.

It is found in the secreted. Has antimicrobial activity. This chain is Defensin-B4, found in Ornithorhynchus anatinus (Duckbill platypus).